The sequence spans 592 residues: Aspartate--tRNA(Asp/Asn) ligase (592 aa).

L-aspartate is bound at residue Glu-175. The aspartate stretch occupies residues 199-202; sequence QLFK. An L-aspartate-binding site is contributed by Arg-221. Residues 221-223 and Gln-230 each bind ATP; that span reads RDE. His-450 is an L-aspartate binding site. Glu-483 provides a ligand contact to ATP. L-aspartate is bound at residue Arg-490. 535–538 lines the ATP pocket; the sequence is GLDR.

The protein belongs to the class-II aminoacyl-tRNA synthetase family. Type 1 subfamily. Homodimer.

It localises to the cytoplasm. It catalyses the reaction tRNA(Asx) + L-aspartate + ATP = L-aspartyl-tRNA(Asx) + AMP + diphosphate. Aspartyl-tRNA synthetase with relaxed tRNA specificity since it is able to aspartylate not only its cognate tRNA(Asp) but also tRNA(Asn). Reaction proceeds in two steps: L-aspartate is first activated by ATP to form Asp-AMP and then transferred to the acceptor end of tRNA(Asp/Asn). The sequence is that of Aspartate--tRNA(Asp/Asn) ligase from Acinetobacter baylyi (strain ATCC 33305 / BD413 / ADP1).